A 492-amino-acid polypeptide reads, in one-letter code: MITLESLEMLLSIDENELLDDLVVTLMATPQLAFFFEKYPSLKSALLNDLPHWKETLKQRLRTTQVPPELEREFSCYQRSQSIDNQAFQTRLPAIMDTLNNVESPFLTQASQLITSPERTLGQKVTSGLHALFLQRWRLSLTLQTVSLHQQLMNQEREILLDELQQRLTLSGKLEPILAENENAAGRLWDLSAAQRIQTDPRLLLDFGTFLQRQPALQKLAERLGRSRETKSILTQEAPQEAFRVRVREPATVPEQVSGVHQSDDILRLMPTELVTLGISELEYEFYRRLLEHRLLTYRLQGESWREKVTERPVVHQQNEQQPRGPFIVCVDTSGSMGGFNERCAKAFCLALMRIALADNRRCYIMLFSTGVVKYELTSEDGLEQAIRFLSQSFRGGTDMAACLSALLDKMDDALWHDADAVVISDFIAQRLPDEVVNKVKSRQKQLQHRFHAVAMSDHGKPGIMHIFDHIWRFDTGLKSRLMRRWQHGKAY.

Belongs to the ViaA family. Homodimer. Interacts with RavA.

The protein localises to the cytoplasm. In terms of biological role, component of the RavA-ViaA chaperone complex, which may act on the membrane to optimize the function of some of the respiratory chains. ViaA stimulates the ATPase activity of RavA. The sequence is that of Regulatory protein ViaA from Pectobacterium atrosepticum (strain SCRI 1043 / ATCC BAA-672) (Erwinia carotovora subsp. atroseptica).